The following is a 262-amino-acid chain: MFEARLVQGSVLKRVLEALKDLITEACWDLGSGGISLQSMDSSHVSLVQLTLRSEGFDTYRCDRNIAMGVNLNSMSKILKCAGNEDIITLRAEDNADTLALVFETPNQEKVSDYEMKLMDLDVEQLGIPEQEYSCVVKMPSAEFARICRDLSHIGDAVVISCAKDGVKFSANGELGNGNIKLSQTSNVDKEEEAVTIEMNEPVQLTFALRYLNFFTKATPLSPTVTLSMSADVPLVVEYKIADMGHXKYYLAPKIEDQQEGS.

The DNA-binding element occupies Arg61–Lys80. Residue Lys164 forms a Glycyl lysine isopeptide (Lys-Gly) (interchain with G-Cter in ubiquitin) linkage.

It belongs to the PCNA family. In terms of assembly, homotrimer. Forms a complex with activator 1 heteropentamer in the presence of ATP. Component of the replisome complex. In terms of processing, monoubiquitinated by the UBE2B-RAD18 complex on Lys-164. Monoubiquitination at Lys-164 also takes place in undamaged proliferating cells, and is mediated by the DCX(DTL) complex, leading to enhance PCNA-dependent translesion DNA synthesis.

The protein localises to the nucleus. This protein is an auxiliary protein of DNA polymerase delta and is involved in the control of eukaryotic DNA replication by increasing the polymerase's processibility during elongation of the leading strand. The protein is Proliferating cell nuclear antigen (PCNA) of Coturnix japonica (Japanese quail).